Consider the following 461-residue polypeptide: Dihydrolipoyl dehydrogenase (461 aa).

FAD is bound by residues 34-42 (EEDQAGGTC), Lys-51, and Gly-114. Cysteines 42 and 47 form a disulfide. NAD(+) contacts are provided by residues 177 to 181 (GGGVI), Glu-200, and 261 to 264 (AIGR). Residues Asp-304 and Ala-312 each coordinate FAD. His-436 (proton acceptor) is an active-site residue.

This sequence belongs to the class-I pyridine nucleotide-disulfide oxidoreductase family. The cofactor is FAD.

The protein resides in the cytoplasm. It carries out the reaction N(6)-[(R)-dihydrolipoyl]-L-lysyl-[protein] + NAD(+) = N(6)-[(R)-lipoyl]-L-lysyl-[protein] + NADH + H(+). Its function is as follows. The branched-chain alpha-keto dehydrogenase complex catalyzes the overall conversion of alpha-keto acids to acyl-CoA and CO(2). It contains multiple copies of 3 enzymatic components: branched-chain alpha-keto acid decarboxylase (E1), lipoamide acyltransferase (E2) and lipoamide dehydrogenase (E3). The polypeptide is Dihydrolipoyl dehydrogenase (lpdA) (Chlamydia pneumoniae (Chlamydophila pneumoniae)).